The following is a 350-amino-acid chain: Protein RecA (350 aa).

68 to 75 (GPESSGKT) contacts ATP.

It belongs to the RecA family.

The protein localises to the cytoplasm. Functionally, can catalyze the hydrolysis of ATP in the presence of single-stranded DNA, the ATP-dependent uptake of single-stranded DNA by duplex DNA, and the ATP-dependent hybridization of homologous single-stranded DNAs. It interacts with LexA causing its activation and leading to its autocatalytic cleavage. The protein is Protein RecA of Mycolicibacterium gilvum (strain PYR-GCK) (Mycobacterium gilvum (strain PYR-GCK)).